The sequence spans 543 residues: CBS domain-containing protein CBSCBSPB1 (543 aa).

The interval 1-35 (MASQGGPRRSLSVTTASLHGKKKSMDMAERGLDTG) is disordered. A Phosphoserine modification is found at S17. Over residues 23–35 (KSMDMAERGLDTG) the composition is skewed to basic and acidic residues. CBS domains follow at residues 59-118 (RLSK…NVEE), 125-183 (MTKN…RAAE), 225-285 (IIPD…LPPS), and 293-350 (MTQN…AGTT). The disordered stretch occupies residues 372-393 (LSPNEDDEDSRSESSMKVASEA). Residues 402-489 (ANTFSFKIED…KSLRLHLDDS (88 aa)) form the PB1 domain. A helical membrane pass occupies residues 518–538 (AYSGVAAGAALVAGLGFMAFL).

The protein localises to the membrane. This Arabidopsis thaliana (Mouse-ear cress) protein is CBS domain-containing protein CBSCBSPB1 (CBSCBSPB1).